We begin with the raw amino-acid sequence, 147 residues long: Hemoglobin subunit beta-1 (147 aa).

Residue Ser2 is modified to N-acetylserine. The Globin domain occupies 3-147; that stretch reads FLSAEEKGLV…VASALAHRYH (145 aa). Lys18 carries the post-translational modification N6-succinyllysine. Residues Ser45 and Ser51 each carry the phosphoserine modification. Lys60 carries the N6-succinyllysine modification. Residues His64 and His93 each contribute to the heme b site. The residue at position 105 (Arg105) is an Asymmetric dimethylarginine.

This sequence belongs to the globin family. As to quaternary structure, heterotetramer of two alpha chains and two beta chains. Red blood cells.

Its function is as follows. Involved in oxygen transport from the lung to the various peripheral tissues. The chain is Hemoglobin subunit beta-1 (HBB1) from Panthera onca (Jaguar).